Here is a 246-residue protein sequence, read N- to C-terminus: Small ribosomal subunit protein uS2 (246 aa).

Belongs to the universal ribosomal protein uS2 family.

The polypeptide is Small ribosomal subunit protein uS2 (Stutzerimonas stutzeri (strain A1501) (Pseudomonas stutzeri)).